Consider the following 462-residue polypeptide: Steroidogenic factor 1 (462 aa).

The nuclear receptor DNA-binding region spans 10–85; sequence DELCPVCGDK…VGMRLEAVRA (76 aa). The segment at 13–33 adopts an NR C4-type zinc-finger fold; sequence CPVCGDKVSGYHYGLLTCESC. 3 positions are modified to N6-acetyllysine: Lys34, Lys38, and Lys72. The NR C4-type zinc finger occupies 49–73; that stretch reads CTESQSCKIDKTQRKRCPFCRFQKC. Positions 117–149 are disordered; the sequence is GFKLETGPPMGVPPPPPPPPDYMLPPSLHAPEP. Residue Lys119 forms a Glycyl lysine isopeptide (Lys-Gly) (interchain with G-Cter in SUMO) linkage. The span at 126–139 shows a compositional bias: pro residues; the sequence is MGVPPPPPPPPDYM. Residue Lys194 forms a Glycyl lysine isopeptide (Lys-Gly) (interchain with G-Cter in SUMO) linkage. Ser203 carries the post-translational modification Phosphoserine; by CDK7. The NR LBD domain occupies 223–460; the sequence is NVPELILQLL…NLLIEMLQAK (238 aa). A 1,2-diacyl-sn-glycero-3-phosphocholine-binding residues include Gly342, Tyr437, and Lys441.

It belongs to the nuclear hormone receptor family. NR5 subfamily. In terms of assembly, binds DNA as a monomer. Part of a complex consisting of SFPQ, NONO and NR5A1. Interacts with NR0B2, NCOA2 and PPARGC1A. Interacts with DGKQ and CDK7. Binds to and activated by HIPK3. Acetylation stimulates the transcriptional activity. In terms of processing, sumoylation reduces CDK7-mediated phosphorylation on Ser-203. Post-translationally, phosphorylated on Ser-203 by CDK7. This phosphorylation promotes transcriptional activity.

It localises to the nucleus. Transcriptional activator. Seems to be essential for sexual differentiation and formation of the primary steroidogenic tissues. Binds to the Ad4 site found in the promoter region of steroidogenic P450 genes such as CYP11A, CYP11B and CYP21B. Also regulates the AMH/Muellerian inhibiting substance gene as well as the AHCH and STAR genes. 5'-YCAAGGYC-3' and 5'-RRAGGTCA-3' are the consensus sequences for the recognition by NR5A1. The SFPQ-NONO-NR5A1 complex binds to the CYP17 promoter and regulates basal and cAMP-dependent transcriptional activity. Binds phosphatidylcholine and phospholipids with a phosphatidylinositol (PI) headgroup, in particular PI(3,4)P2 and PI(3,4,5)P3. Activated by the phosphorylation of NR5A1 by HIPK3 leading to increased steroidogenic gene expression upon cAMP signaling pathway stimulation. This Rattus norvegicus (Rat) protein is Steroidogenic factor 1 (Nr5a1).